Consider the following 301-residue polypeptide: ATP synthase subunit gamma, mitochondrial (301 aa).

It belongs to the ATPase gamma chain family. In terms of assembly, F-type ATPases have 2 components, CF(1) - the catalytic core - and CF(0) - the membrane proton channel. CF(1) has five subunits: alpha(3), beta(3), gamma(1), delta(1), epsilon(1). CF(0) has three main subunits: a, b and c.

The protein resides in the mitochondrion. Its subcellular location is the mitochondrion inner membrane. Functionally, mitochondrial membrane ATP synthase (F(1)F(0) ATP synthase or Complex V) produces ATP from ADP in the presence of a proton gradient across the membrane which is generated by electron transport complexes of the respiratory chain. F-type ATPases consist of two structural domains, F(1) - containing the extramembraneous catalytic core, and F(0) - containing the membrane proton channel, linked together by a central stalk and a peripheral stalk. During catalysis, ATP synthesis in the catalytic domain of F(1) is coupled via a rotary mechanism of the central stalk subunits to proton translocation. Part of the complex F(1) domain and the central stalk which is part of the complex rotary element. The gamma subunit protrudes into the catalytic domain formed of alpha(3)beta(3). Rotation of the central stalk against the surrounding alpha(3)beta(3) subunits leads to hydrolysis of ATP in three separate catalytic sites on the beta subunits. The chain is ATP synthase subunit gamma, mitochondrial (atp3) from Schizosaccharomyces pombe (strain 972 / ATCC 24843) (Fission yeast).